The primary structure comprises 434 residues: Enolase (434 aa).

Substrate contacts are provided by H158 and E167. The Proton donor role is filled by E210. D245, E294, and D319 together coordinate Mg(2+). Substrate contacts are provided by E294 and D319. The active-site Proton acceptor is the K344. Substrate contacts are provided by residues 371–374 (SHRS) and K395.

Belongs to the enolase family. As to quaternary structure, homodimer. Mg(2+) serves as cofactor.

The protein resides in the cytoplasm. It carries out the reaction (2R)-2-phosphoglycerate = phosphoenolpyruvate + H2O. Its pathway is carbohydrate degradation; glycolysis; pyruvate from D-glyceraldehyde 3-phosphate: step 4/5. The protein is Enolase of Doryteuthis pealeii (Longfin inshore squid).